Here is a 373-residue protein sequence, read N- to C-terminus: Mannitol-1-phosphate 5-dehydrogenase (373 aa).

3-14 (ALHFGAGNIGRG) provides a ligand contact to NAD(+).

It belongs to the mannitol dehydrogenase family.

It carries out the reaction D-mannitol 1-phosphate + NAD(+) = beta-D-fructose 6-phosphate + NADH + H(+). This is Mannitol-1-phosphate 5-dehydrogenase (mtlD) from Bacillus subtilis (strain 168).